We begin with the raw amino-acid sequence, 962 residues long: RNA-binding protein 15 (962 aa).

Basic and acidic residues-rich tracts occupy residues Met-1–Pro-10, Leu-34–Pro-52, and Arg-59–Lys-72. The disordered stretch occupies residues Met-1–Glu-167. Residues Gly-82–Arg-94 are compositionally biased toward low complexity. The segment covering Leu-97–Glu-112 has biased composition (basic and acidic residues). Ser-108 is modified (phosphoserine). Over residues Ser-118–Ser-129 the composition is skewed to low complexity. Residues Ser-134–Glu-149 show a composition bias toward gly residues. The span at Ser-150–Ala-159 shows a compositional bias: low complexity. The region spanning Lys-169–Val-251 is the RRM 1 domain. A phosphoserine mark is found at Ser-178, Ser-207, and Ser-209. Lys-245 is covalently cross-linked (Glycyl lysine isopeptide (Lys-Gly) (interchain with G-Cter in SUMO2)). Residues Ser-252, Ser-256, and Ser-258 each carry the phosphoserine modification. Residues Arg-257 to Ala-297 form a disordered region. Tyr-265 is modified (phosphotyrosine). The span at Ser-268–Gly-277 shows a compositional bias: low complexity. Residues Ser-291, Ser-293, and Ser-364 each carry the phosphoserine modification. RRM domains lie at Arg-373–Ala-450 and Thr-454–Thr-528. Glycyl lysine isopeptide (Lys-Gly) (interchain with G-Cter in SUMO2) cross-links involve residues Lys-405, Lys-419, and Lys-444. N6-acetyllysine is present on Lys-449. 2 stretches are compositionally biased toward basic and acidic residues: residues Gly-553–Tyr-580 and Ser-612–Pro-661. Residues Gly-553–Ala-779 are disordered. Phosphothreonine is present on Thr-567. An Asymmetric dimethylarginine; alternate; by PRMT1 modification is found at Arg-577. At Arg-577 the chain carries Omega-N-methylarginine; alternate; by PRMT1. 5 positions are modified to phosphoserine: Ser-621, Ser-655, Ser-670, Ser-674, and Ser-701. Composition is skewed to basic and acidic residues over residues Arg-673–Ser-692, Ser-701–Asp-729, and Asn-742–Asp-751. Residue Lys-745 forms a Glycyl lysine isopeptide (Lys-Gly) (interchain with G-Cter in SUMO2) linkage. Low complexity predominate over residues Ala-754–Gln-771. Phosphoserine occurs at positions 768 and 782. One can recognise an SPOC domain in the interval Val-778 to Lys-957. Residues Gly-866–Thr-885 form a disordered region. The segment covering Ser-867 to Thr-885 has biased composition (low complexity). Ser-936 carries the post-translational modification Phosphoserine.

The protein belongs to the RRM Spen family. As to quaternary structure, component of the WMM complex, a N6-methyltransferase complex composed of a catalytic subcomplex, named MAC, and of an associated subcomplex, named MACOM. The MAC subcomplex is composed of METTL3 and METTL14. The MACOM subcomplex is composed of WTAP, ZC3H13, CBLL1/HAKAI, VIRMA, and, in some cases of RBM15 (RBM15 or RBM15B). Also a component of a MACOM-like complex, named WTAP complex, composed of WTAP, ZC3H13, CBLL1, VIRMA, RBM15, BCLAF1 and THRAP3. Interacts with RBPJ. Interacts (via SPOC domain) with SETD1B. Interacts with NXF1, the interaction is required to promote mRNA export. Interacts with SF3B1. Methylated at Arg-577 by PRMT1, leading to promote ubiquitination by CNOT4 and subsequent degradation by the proteasome. Post-translationally, ubiquitinated by CNOT4 following methylation at Arg-577 by PRMT1.

Its subcellular location is the nucleus speckle. It localises to the nucleus. The protein resides in the nucleoplasm. It is found in the nucleus envelope. The protein localises to the nucleus membrane. In terms of biological role, RNA-binding protein that acts as a key regulator of N6-methyladenosine (m6A) methylation of RNAs, thereby regulating different processes, such as hematopoietic cell homeostasis, alternative splicing of mRNAs and X chromosome inactivation mediated by Xist RNA. Associated component of the WMM complex, a complex that mediates N6-methyladenosine (m6A) methylation of RNAs, a modification that plays a role in the efficiency of mRNA splicing and RNA processing. Plays a key role in m6A methylation, possibly by binding target RNAs and recruiting the WMM complex. Involved in random X inactivation mediated by Xist RNA: acts by binding Xist RNA and recruiting the WMM complex, which mediates m6A methylation, leading to target YTHDC1 reader on Xist RNA and promoting transcription repression activity of Xist. Required for the development of multiple tissues, such as the maintenance of the homeostasis of long-term hematopoietic stem cells and for megakaryocyte (MK) and B-cell differentiation. Regulates megakaryocyte differentiation by regulating alternative splicing of genes important for megakaryocyte differentiation; probably regulates alternative splicing via m6A regulation. Required for placental vascular branching morphogenesis and embryonic development of the heart and spleen. Acts as a regulator of thrombopoietin response in hematopoietic stem cells by regulating alternative splicing of MPL. May also function as an mRNA export factor, stimulating export and expression of RTE-containing mRNAs which are present in many retrotransposons that require to be exported prior to splicing. High affinity binding of pre-mRNA to RBM15 may allow targeting of the mRNP to the export helicase DBP5 in a manner that is independent of splicing-mediated NXF1 deposition, resulting in export prior to splicing. May be implicated in HOX gene regulation. The polypeptide is RNA-binding protein 15 (Mus musculus (Mouse)).